Here is a 361-residue protein sequence, read N- to C-terminus: tRNA-specific 2-thiouridylase MnmA (361 aa).

Residues 8 to 15 and Met-35 contribute to the ATP site; that span reads AMSGGVDS. The interaction with target base in tRNA stretch occupies residues 95–97; sequence NPD. The Nucleophile role is filled by Cys-100. Cys-100 and Cys-196 are disulfide-bonded. Gly-124 provides a ligand contact to ATP. Residues 146-148 form an interaction with tRNA region; sequence KDQ. Cys-196 functions as the Cysteine persulfide intermediate in the catalytic mechanism. The tract at residues 303 to 304 is interaction with tRNA; it reads RY.

This sequence belongs to the MnmA/TRMU family.

The protein localises to the cytoplasm. It catalyses the reaction S-sulfanyl-L-cysteinyl-[protein] + uridine(34) in tRNA + AH2 + ATP = 2-thiouridine(34) in tRNA + L-cysteinyl-[protein] + A + AMP + diphosphate + H(+). Functionally, catalyzes the 2-thiolation of uridine at the wobble position (U34) of tRNA, leading to the formation of s(2)U34. This is tRNA-specific 2-thiouridylase MnmA from Chlamydia felis (strain Fe/C-56) (Chlamydophila felis).